Reading from the N-terminus, the 151-residue chain is MFRGATAVNLDSKGRVAIPTRYRAEILEKNQGKMVCTVDIRQPCLLLYPLMNGKKSNKKLLALSNFDPTQRRLQRVMLGHATECEMDAQGRILFSGPLRQHAKLEKGLMLVGQLNKFEIWSDVEWHTQIAEDIEIGSSADFAADALNDFSL.

SpoVT-AbrB domains lie at 5–52 and 81–124; these read ATAV…PLMN and ATEC…SDVE.

The protein belongs to the MraZ family. In terms of assembly, forms oligomers.

The protein localises to the cytoplasm. The protein resides in the nucleoid. The sequence is that of Transcriptional regulator MraZ from Haemophilus influenzae (strain PittGG).